An 889-amino-acid chain; its full sequence is MDTKTQIIDYDGNIMEDLKEWMIRNKLANLGFNYNVIAILGSQSSGKSTLLNNLFKTSFDVMNTKLGHSQTTQGLWLSFDTFEDSSAGPSEQGSTTRKVNPTLILDVEGNDSKERGDNRLTFEHRSALFSLALADCVIVNLWYHSLGNFTASNYGLLKTVMEVNLELFQQDENCPKTILLFTVRDWFEEFASIDIVKNKIVEEYLNKIWTEMKKPPEAEKVNISNYFIVEVVGLSHGIIKKEEFLKDVENLRQKWINQLRPLQYSRNIPSDGFAHYCNNIWNTIVKQSQLDIPSQKEMLATFRCQEIKNNVISNASKVIKEKLAASSSQHSSTSIDEFKPWAEKEVVEKSLDEYFVDASRYTESICLKTSEELLDSLFIQLQTIVDNNLNFTQRVLAAKFANELNTMYSVCASDKNVFLFSKESNLQVRKDGKGGSSPSAGDKKDTKDTRSSQDKCIRLWSSFLLNADKLEYNTLCKFFEDYQKCNIEVKKRNKTHEFNYKPSLSILSTAICKDLNRIRNAQLTVLLDRTRATIKSRFKNMESLLITTKNPEEYWNHTLKIVKALQESINSNLTKCFINLKGGGAGPGSITTAGIIPNGGLYNDEDNTFHEDNLVEAHNSLSDNQTGHENDHYVEENLLNFHKIDVIKNKGKYISTVGEEIDKQVKNKNAIAELNSYYLDEIMDVLKSKLDEISDNLSSIIIQRFESVFNYDDAEQPRQWREISMAELKKIFRESKNYAFLIIDILQKNVQVEIIDDYLPNNFIKDEIVEKGKNKAKRKIQEMCRDAQYIQETGAKMSLKNVPLFFWVILLILGWNELLFFTRFFFRLNIILPLFLAAAVILSTLVFNGNMEVLSIINKAVFFLAKNSFGVYRQLQAMGGKAAQGAAAD.

The Cytoplasmic portion of the chain corresponds to 1-801 (MDTKTQIIDY…ETGAKMSLKN (801 aa)). Residues 31–277 (GFNYNVIAIL…IPSDGFAHYC (247 aa)) form the GB1/RHD3-type G domain. GTP is bound at residue 41-48 (GSQSSGKS). Residues 429–449 (RKDGKGGSSPSAGDKKDTKDT) are disordered. Positions 679-699 (LDEIMDVLKSKLDEISDNLSS) form a coiled coil. Residues 802–822 (VPLFFWVILLILGWNELLFFT) form a helical membrane-spanning segment. Over 823 to 825 (RFF) the chain is Lumenal. The helical transmembrane segment at 826-846 (FRLNIILPLFLAAAVILSTLV) threads the bilayer. The Cytoplasmic segment spans residues 847–889 (FNGNMEVLSIINKAVFFLAKNSFGVYRQLQAMGGKAAQGAAAD).

It belongs to the TRAFAC class dynamin-like GTPase superfamily. GB1/RHD3 GTPase family. RHD3 subfamily.

It is found in the endoplasmic reticulum membrane. Its function is as follows. Probable GTP-binding protein involved in generating and maintaining the structure of the tubular endoplasmic reticulum network. The protein is Protein SEY1 homolog of Plasmodium vivax (strain Salvador I).